The chain runs to 298 residues: UDP-3-O-acyl-N-acetylglucosamine deacetylase (298 aa).

Residues His79, His239, and Asp243 each contribute to the Zn(2+) site. His266 (proton donor) is an active-site residue.

It belongs to the LpxC family. Requires Zn(2+) as cofactor.

The enzyme catalyses a UDP-3-O-[(3R)-3-hydroxyacyl]-N-acetyl-alpha-D-glucosamine + H2O = a UDP-3-O-[(3R)-3-hydroxyacyl]-alpha-D-glucosamine + acetate. Its pathway is glycolipid biosynthesis; lipid IV(A) biosynthesis; lipid IV(A) from (3R)-3-hydroxytetradecanoyl-[acyl-carrier-protein] and UDP-N-acetyl-alpha-D-glucosamine: step 2/6. Catalyzes the hydrolysis of UDP-3-O-myristoyl-N-acetylglucosamine to form UDP-3-O-myristoylglucosamine and acetate, the committed step in lipid A biosynthesis. The protein is UDP-3-O-acyl-N-acetylglucosamine deacetylase of Wigglesworthia glossinidia brevipalpis.